A 490-amino-acid polypeptide reads, in one-letter code: Histone-lysine N-methyltransferase, H3 lysine-9 specific (490 aa).

The region spanning 8–69 (YEVERIVDEK…RKRRLKGSNS (62 aa)) is the Chromo domain. Disordered stretches follow at residues 61-133 (KRRL…TALT) and 150-190 (KKLG…KPRN). Residues 102 to 114 (FSRELNVKKENKK) show a composition bias toward basic and acidic residues. A compositionally biased stretch (polar residues) spans 115-133 (VFSSQTTKRQSRKQSTALT). At lysine 127 the chain carries N6,N6,N6-trimethyllysine; alternate. N6-methyllysine; alternate is present on lysine 127. Positions 155-168 (TRNEVKEESQKREL) are enriched in basic and acidic residues. Polar residues predominate over residues 169-185 (VSNSIKEATSPKTSSIL). One can recognise a Pre-SET domain in the interval 258-325 (SGCNCSSLGG…ECPNRVVQRG (68 aa)). Zn(2+)-binding residues include cysteine 260, cysteine 262, cysteine 268, cysteine 276, cysteine 278, cysteine 307, cysteine 311, cysteine 313, and cysteine 317. Residues 328–452 (LPLEIFKTKE…PLEELTFDYA (125 aa)) form the SET domain. S-adenosyl-L-methionine-binding positions include 338–340 (KGW), tyrosine 381, arginine 406, and 407–410 (FFNH). Cysteine 412 contacts Zn(2+). An autoregulatory loop region spans residues 453 to 472 (GAKDFSPVQSQKSQQNRISK). Lysine 455 carries the post-translational modification N6,N6,N6-trimethyllysine; by autocatalysis; alternate. Lysine 455 is modified (N6,N6-dimethyllysine; by autocatalysis; alternate). Lysine 455 bears the N6-methyllysine; by autocatalysis; alternate mark. Position 464 is an N6-methyllysine (lysine 464). A Post-SET domain is found at 473 to 489 (LRRQCKCGSANCRGWLF). Cysteine 477, cysteine 479, and cysteine 484 together coordinate Zn(2+). 477 to 478 (CK) contributes to the S-adenosyl-L-methionine binding site.

This sequence belongs to the class V-like SAM-binding methyltransferase superfamily. Histone-lysine methyltransferase family. Suvar3-9 subfamily. Component of the Clr4 methyltransferase complex (ClrC) composed of at least clr4, rik1, pcu4, rbx1, raf1 and raf2. The cullin pcu4, rik1, raf1, raf2 and the ring-box protein rbx1 are components of an E3 ubiquitin ligase, whose activity is essential for heterochromatin assembly. Interacts directly with pcu4. Interacts with mlo3. Autocatalytic methylation of specific lysine residues in an internal loop (autoregulatory loop) promote a conformational switch that enhances the H3K9me activity of clr4.

The protein resides in the nucleus. It localises to the cytoplasm. Its subcellular location is the cytoskeleton. The protein localises to the microtubule organizing center. It is found in the spindle pole body. The protein resides in the chromosome. It catalyses the reaction L-lysyl(9)-[histone H3] + 3 S-adenosyl-L-methionine = N(6),N(6),N(6)-trimethyl-L-lysyl(9)-[histone H3] + 3 S-adenosyl-L-homocysteine + 3 H(+). The catalysed reaction is N(6)-methyl-L-lysyl(9)-[histone H3] + S-adenosyl-L-methionine = N(6),N(6)-dimethyl-L-lysyl(9)-[histone H3] + S-adenosyl-L-homocysteine + H(+). It carries out the reaction N(6),N(6)-dimethyl-L-lysyl(9)-[histone H3] + S-adenosyl-L-methionine = N(6),N(6),N(6)-trimethyl-L-lysyl(9)-[histone H3] + S-adenosyl-L-homocysteine + H(+). The enzyme catalyses L-lysyl-[protein] + S-adenosyl-L-methionine = N(6)-methyl-L-lysyl-[protein] + S-adenosyl-L-homocysteine + H(+). It catalyses the reaction N(6)-methyl-L-lysyl-[protein] + S-adenosyl-L-methionine = N(6),N(6)-dimethyl-L-lysyl-[protein] + S-adenosyl-L-homocysteine + H(+). The catalysed reaction is N(6),N(6)-dimethyl-L-lysyl-[protein] + S-adenosyl-L-methionine = N(6),N(6),N(6)-trimethyl-L-lysyl-[protein] + S-adenosyl-L-homocysteine + H(+). It carries out the reaction L-lysyl(9)-[histone H3] + S-adenosyl-L-methionine = N(6)-methyl-L-lysyl(9)-[histone H3] + S-adenosyl-L-homocysteine + H(+). Its activity is regulated as follows. An internal loop (autoregulatory loop) inhibits the catalytic activity of the enzyme by blocking the histone H3K9 substrate-binding pocket. Autocatalytic methylation of specific lysine residues in this loop promote a conformational switch that enhances the H3K9me activity of clr4. In terms of biological role, histone methyltransferase which contributes to the establishment of heterochromatin by specifically methylating histone H3 to form H3K9me. Part of the Clr4 methyltransferase complex (ClrC). ClrC preferentially ubiquitylates H3K14 and ClrC-mediated H3 ubiquitination promotes clr4 methyltransferase activity. Clr4 functions as a reader and writer of H3K9 methylation. It sets the H3K9me mark and afterwards this H3K9me mark is recognized by the chromodomains of clr4 and swi6/HP1, which then recruit additional clr4 leading to the methylation of neighboring nucleosomes. H3K9me represents a specific tag for epigenetic transcriptional repression by recruiting swi6/HP1 to methylated histones which leads to transcriptional silencing within centromeric heterochromatin, telomeres, ribosomal DNA repeats, and the silent mating-type region. Clr4 methyltransferase activity promotes the assembly of a tripartite complex composed of ClrC and complexes involved in siRNA generation. Apart from H3K9, also methylates non-histone proteins such as mlo3. Interacts with mlo3 to promote the processing of centromeric and antisense RNAs. In Schizosaccharomyces pombe (strain 972 / ATCC 24843) (Fission yeast), this protein is Histone-lysine N-methyltransferase, H3 lysine-9 specific (clr4).